Here is a 251-residue protein sequence, read N- to C-terminus: Triosephosphate isomerase (251 aa).

Position 8 to 10 (8 to 10 (NWK)) interacts with substrate. Residue His-97 is the Electrophile of the active site. Catalysis depends on Glu-170, which acts as the Proton acceptor. Substrate-binding positions include Gly-176, Ser-215, and 236-237 (GG).

It belongs to the triosephosphate isomerase family. In terms of assembly, homodimer.

Its subcellular location is the cytoplasm. The catalysed reaction is D-glyceraldehyde 3-phosphate = dihydroxyacetone phosphate. It participates in carbohydrate biosynthesis; gluconeogenesis. Its pathway is carbohydrate degradation; glycolysis; D-glyceraldehyde 3-phosphate from glycerone phosphate: step 1/1. Its function is as follows. Involved in the gluconeogenesis. Catalyzes stereospecifically the conversion of dihydroxyacetone phosphate (DHAP) to D-glyceraldehyde-3-phosphate (G3P). The sequence is that of Triosephosphate isomerase from Nitratidesulfovibrio vulgaris (strain ATCC 29579 / DSM 644 / CCUG 34227 / NCIMB 8303 / VKM B-1760 / Hildenborough) (Desulfovibrio vulgaris).